The following is a 218-amino-acid chain: MSANALGMIIFAYLCGSISSAILICRLARLPDPRKFGSGNPGATNVLRIGGKLAAASVLICDVLKGMIPVWLAYYLNVPPFYLGIVAIAACLGHIYPVFFHFKGGKGVATAFGSIAAIGWDLSGLIAGTWLLTVLLSGYSSLGAIISALLAPFYVWWFKPEFTYPVALLSCLVLYRHHDNIQRLWRGQESRIWHKLKKKTEKTDKEIIQEAKEQEKED.

5 consecutive transmembrane segments (helical) span residues 5 to 25, 53 to 73, 80 to 100, 115 to 135, and 138 to 158; these read ALGMIIFAYLCGSISSAILIC, LAAASVLICDVLKGMIPVWLA, PFYLGIVAIAACLGHIYPVFF, IAAIGWDLSGLIAGTWLLTVL, and GYSSLGAIISALLAPFYVWWF.

This sequence belongs to the PlsY family. As to quaternary structure, probably interacts with PlsX.

The protein localises to the cell inner membrane. The catalysed reaction is an acyl phosphate + sn-glycerol 3-phosphate = a 1-acyl-sn-glycero-3-phosphate + phosphate. The protein operates within lipid metabolism; phospholipid metabolism. Functionally, catalyzes the transfer of an acyl group from acyl-phosphate (acyl-PO(4)) to glycerol-3-phosphate (G3P) to form lysophosphatidic acid (LPA). This enzyme utilizes acyl-phosphate as fatty acyl donor, but not acyl-CoA or acyl-ACP. In Proteus mirabilis (strain HI4320), this protein is Glycerol-3-phosphate acyltransferase.